Here is a 422-residue protein sequence, read N- to C-terminus: 5-hydroxytryptamine receptor 1A (422 aa).

At Met-1–Ile-38 the chain is on the extracellular side. Residues Asn-10, Asn-11, and Asn-24 are each glycosylated (N-linked (GlcNAc...) asparagine). The helical transmembrane segment at Thr-39–Ala-59 threads the bilayer. Over Ala-60–Tyr-73 the chain is Cytoplasmic. The chain crosses the membrane as a helical span at residues Leu-74–Val-98. Residues Leu-99–Val-107 lie on the Extracellular side of the membrane. The chain crosses the membrane as a helical span at residues Thr-108–Leu-132. An intrachain disulfide couples Cys-109 to Cys-187. Serotonin-binding residues include Asp-116 and Cys-120. The DRY motif; important for ligand-induced conformation changes motif lies at Asp-133–Tyr-135. Residues Asp-133–Arg-152 are Cytoplasmic-facing. The helical transmembrane segment at Ala-153–Gly-174 threads the bilayer. Over Trp-175 to His-193 the chain is Extracellular. A helical transmembrane segment spans residues Gly-194–Gly-216. The Cytoplasmic segment spans residues Arg-217–Thr-346. The segment at Lys-235–Gly-261 is disordered. Lys-345, Thr-346, and Gly-352 together coordinate 1D-myo-inositol 4-phosphate. A helical transmembrane segment spans residues Leu-347–Phe-370. Residues Cys-371 to Pro-378 lie on the Extracellular side of the membrane. Residues Ala-379 to Phe-403 form a helical membrane-spanning segment. Positions Asn-396–Tyr-400 match the NPxxY motif; important for ligand-induced conformation changes and signaling motif. The 1D-myo-inositol 4-phosphate site is built by Phe-403, Asn-404, and Lys-405. The Cytoplasmic portion of the chain corresponds to Asn-404–Arg-422.

This sequence belongs to the G-protein coupled receptor 1 family. 5-hydroxytryptamine receptor subfamily. HTR1A sub-subfamily. Heterodimer; heterodimerizes with GPER1. Interacts with YIF1B. Interacts with GPR39 and GALR1. In terms of tissue distribution, detected in hypothalamus, mesencephalon, amygdala, medulla, thalamus, septum and hippocampus.

The protein resides in the cell membrane. The protein localises to the cell projection. It is found in the dendrite. With respect to regulation, G-protein coupled receptor activity is regulated by lipids: phosphatidylinositol 4-phosphate increases HTR1A-mediated activity. Functionally, G-protein coupled receptor for 5-hydroxytryptamine (serotonin). Also functions as a receptor for various drugs and psychoactive substances. Ligand binding causes a conformation change that triggers signaling via guanine nucleotide-binding proteins (G proteins) and modulates the activity of downstream effectors, such as adenylate cyclase. HTR1A is coupled to G(i)/G(o) G alpha proteins and mediates inhibitory neurotransmission: signaling inhibits adenylate cyclase activity and activates a phosphatidylinositol-calcium second messenger system that regulates the release of Ca(2+) ions from intracellular stores. Beta-arrestin family members regulate signaling by mediating both receptor desensitization and resensitization processes. The sequence is that of 5-hydroxytryptamine receptor 1A from Rattus norvegicus (Rat).